Consider the following 224-residue polypeptide: Ribosome maturation factor RimP (224 aa).

The segment at 194–224 is disordered; the sequence is REGRIPGDDLGSEEAGEQSDETASGEAEDKE. The segment covering 203-213 has biased composition (acidic residues); the sequence is LGSEEAGEQSD.

Belongs to the RimP family.

Its subcellular location is the cytoplasm. Its function is as follows. Required for maturation of 30S ribosomal subunits. This is Ribosome maturation factor RimP from Brucella anthropi (strain ATCC 49188 / DSM 6882 / CCUG 24695 / JCM 21032 / LMG 3331 / NBRC 15819 / NCTC 12168 / Alc 37) (Ochrobactrum anthropi).